The following is a 347-amino-acid chain: S-adenosylmethionine:tRNA ribosyltransferase-isomerase (347 aa).

The protein belongs to the QueA family. Monomer.

It is found in the cytoplasm. The enzyme catalyses 7-aminomethyl-7-carbaguanosine(34) in tRNA + S-adenosyl-L-methionine = epoxyqueuosine(34) in tRNA + adenine + L-methionine + 2 H(+). Its pathway is tRNA modification; tRNA-queuosine biosynthesis. Functionally, transfers and isomerizes the ribose moiety from AdoMet to the 7-aminomethyl group of 7-deazaguanine (preQ1-tRNA) to give epoxyqueuosine (oQ-tRNA). This Pseudomonas aeruginosa (strain LESB58) protein is S-adenosylmethionine:tRNA ribosyltransferase-isomerase.